The primary structure comprises 470 residues: MGKLHSKPAAVCKRRESPEGDSFAVSAAWARKGIEEWIGRQRCPGGVSGPRQLRLAGTIGRSTRELVGDVLRDTLSEEEEDDFRLEVALPPEKTDGLGSGDEKKMERVSEPCPGSKKQLKFEELQCDVSMEEDSRQEWTFTLYDFDNNGKVTREDITSLLHTIYEVVDSSVNHSPTSSKMLRVKLTVAPDGSQSKRSVLVNQADLQSARPRAETKPTEDLRSWEKKQRAPLRFQGDSRLEQSGCYHHCVDENIERRNHYLDLAGIENYTSQFGPGSPSVAQKSELPPRTSNPTRSRSHEPEAIHIPHRKPQGVDPASFHFLDTPIAKVSELQQRLRGTQDGSKHFVRSPKAQGKSVGVGHVARGARNKPPLGPAIPAVSPSAHLAASPALLPSLAPLGHKKHKHRAKESQQGCRGLQAPLASGGPVLGREHLRELPALVVYESQAGQPVQRHEHHHHHEHHHHYHHFYQT.

Disordered regions lie at residues 1 to 21 (MGKL…PEGD) and 90 to 114 (PPEK…PCPG). A lipid anchor (N-myristoyl glycine) is attached at glycine 2. The span at 92-109 (EKTDGLGSGDEKKMERVS) shows a compositional bias: basic and acidic residues. Positions 125–190 (QCDVSMEEDS…LRVKLTVAPD (66 aa)) are interaction with DVL1, DVL2 and DVL3. The region spanning 131 to 166 (EEDSRQEWTFTLYDFDNNGKVTREDITSLLHTIYEV) is the EF-hand domain. Ca(2+) contacts are provided by aspartate 144, aspartate 146, asparagine 148, lysine 150, and aspartate 155. The segment covering 192 to 205 (SQSKRSVLVNQADL) has biased composition (polar residues). Disordered regions lie at residues 192 to 228 (SQSK…KKQR), 271 to 314 (QFGP…QGVD), 337 to 357 (GTQD…KSVG), and 446 to 470 (GQPV…FYQT). The span at 210-227 (PRAETKPTEDLRSWEKKQ) shows a compositional bias: basic and acidic residues. Positions 271–281 (QFGPGSPSVAQ) are enriched in polar residues. Over residues 452 to 470 (HEHHHHHEHHHHYHHFYQT) the composition is skewed to basic residues.

This sequence belongs to the NKD family. As to quaternary structure, interacts with DVL1, DVL2, DVL3 and PPP2R3A. As to expression, expressed in colon, heart, kidney, leukocyte, liver, lung, ovary, pancreas, placenta, prostate, skeletal muscle, small intestine and spleen.

It localises to the cell membrane. The protein resides in the cytoplasm. Cell autonomous antagonist of the canonical Wnt signaling pathway. May activate a second Wnt signaling pathway that controls planar cell polarity. This Homo sapiens (Human) protein is Protein naked cuticle homolog 1 (NKD1).